Consider the following 244-residue polypeptide: Phosphatidylinositol phosphate synthase (244 aa).

A run of 3 helical transmembrane segments spans residues Y24 to R42, T49 to Y66, and F72 to M91. D48 to T51 lines the a CDP-1,2-diacyl-sn-glycerol pocket. Mg(2+) is bound by residues D85 and D88. A CDP-1,2-diacyl-sn-glycerol-binding residues include G89, R93, and S99. Mg(2+)-binding residues include D106 and D110. D110 functions as the Proton acceptor in the catalytic mechanism. 3 helical membrane passes run I117 to V137, L174 to G190, and V196 to I214.

The protein belongs to the CDP-alcohol phosphatidyltransferase class-I family. As to quaternary structure, homodimer. It depends on Mg(2+) as a cofactor.

Its subcellular location is the cell membrane. It catalyses the reaction a CDP-1,2-diacyl-sn-glycerol + 1D-myo-inositol 3-phosphate = a 1,2-diacyl-sn-glycero-3-phospho-(1D-myo-inositol-3-phosphate) + CMP + H(+). The enzyme catalyses 1,2-di-(9Z-octadecenoyl)-sn-glycero-3-cytidine-5'-diphosphate + 1D-myo-inositol 3-phosphate = 1,2-di-(9Z-octadecenoyl)-sn-glycero-3-phospho-(1D-myo-inositol-3-phosphate) + CMP + H(+). It participates in phospholipid metabolism; phosphatidylinositol phosphate biosynthesis. Its function is as follows. Catalyzes the conjugation of the 1'-hydroxyl group of D-myo-inositol-3-phosphate (also named L-myo-inositol-1-phosphate) with a lipid tail of cytidine diphosphate diacylglycerol (CDP-DAG), forming phosphatidylinositol phosphate (PIP) and CMP. PIP is a precursor of phosphatidylinositol (PI) which is an essential lipid required for cell wall formation. The chain is Phosphatidylinositol phosphate synthase from Streptomyces avermitilis (strain ATCC 31267 / DSM 46492 / JCM 5070 / NBRC 14893 / NCIMB 12804 / NRRL 8165 / MA-4680).